The following is a 445-amino-acid chain: Putative ankyrin repeat protein L797 (445 aa).

ANK repeat units lie at residues 73-102 (FMED…DIYS), 285-314 (NHEH…ELVG), 315-344 (NLYI…DIRQ), and 346-375 (LDAF…IINI).

This Acanthamoeba polyphaga (Amoeba) protein is Putative ankyrin repeat protein L797.